The sequence spans 1346 residues: DNA-directed RNA polymerase subunit beta (1346 aa).

It belongs to the RNA polymerase beta chain family. The RNAP catalytic core consists of 2 alpha, 1 beta, 1 beta' and 1 omega subunit. When a sigma factor is associated with the core the holoenzyme is formed, which can initiate transcription.

It carries out the reaction RNA(n) + a ribonucleoside 5'-triphosphate = RNA(n+1) + diphosphate. Its function is as follows. DNA-dependent RNA polymerase catalyzes the transcription of DNA into RNA using the four ribonucleoside triphosphates as substrates. This chain is DNA-directed RNA polymerase subunit beta, found in Psychromonas ingrahamii (strain DSM 17664 / CCUG 51855 / 37).